The following is a 469-amino-acid chain: UDP-N-acetylmuramate--L-alanine ligase (469 aa).

Residue 112–118 (GTHGKTT) coordinates ATP.

Belongs to the MurCDEF family.

Its subcellular location is the cytoplasm. It catalyses the reaction UDP-N-acetyl-alpha-D-muramate + L-alanine + ATP = UDP-N-acetyl-alpha-D-muramoyl-L-alanine + ADP + phosphate + H(+). It participates in cell wall biogenesis; peptidoglycan biosynthesis. Functionally, cell wall formation. In Leptothrix cholodnii (strain ATCC 51168 / LMG 8142 / SP-6) (Leptothrix discophora (strain SP-6)), this protein is UDP-N-acetylmuramate--L-alanine ligase.